Here is a 233-residue protein sequence, read N- to C-terminus: MIDMHLHSTFSYDGKAEIDDIISQVQKLGIEHFCITDHYEYENGELVHDFNVEEYFLTMEKYDLPKGAEISWDGVGEAVFPDGFDYLLLGIHRYDENLPPDELARDYLERTLFVMERVKFHTLAHLDYPARYAKADFKANRDLIEKILVFLVKNEKALEINTAGLFKHGKPNPDYWIVEMYYDLGGRVVTIGSDAHESQHIGRGIEEVMRELKKFNFEYLAVDGKKLVTVKLR.

This sequence belongs to the PHP hydrolase family. HisK subfamily.

It catalyses the reaction L-histidinol phosphate + H2O = L-histidinol + phosphate. The protein operates within amino-acid biosynthesis; L-histidine biosynthesis; L-histidine from 5-phospho-alpha-D-ribose 1-diphosphate: step 8/9. The chain is Probable histidinol-phosphatase (hisK) from Thermotoga maritima (strain ATCC 43589 / DSM 3109 / JCM 10099 / NBRC 100826 / MSB8).